The following is a 232-amino-acid chain: UPF0758 protein BH3032 (232 aa).

The region spanning 107 to 229 is the MPN domain; it reads VIRTPEDVSR…FVSLKEKGHL (123 aa). Positions 178, 180, and 191 each coordinate Zn(2+). Residues 178-191 carry the JAMM motif motif; that stretch reads HNHPSGDPTPSRED.

This sequence belongs to the UPF0758 family.

In Halalkalibacterium halodurans (strain ATCC BAA-125 / DSM 18197 / FERM 7344 / JCM 9153 / C-125) (Bacillus halodurans), this protein is UPF0758 protein BH3032.